A 344-amino-acid chain; its full sequence is Heat-inducible transcription repressor HrcA (344 aa).

The protein belongs to the HrcA family.

Functionally, negative regulator of class I heat shock genes (grpE-dnaK-dnaJ and groELS operons). Prevents heat-shock induction of these operons. This chain is Heat-inducible transcription repressor HrcA, found in Streptococcus pneumoniae (strain Taiwan19F-14).